The following is a 396-amino-acid chain: Protein-export membrane protein SecD (396 aa).

6 helical membrane-spanning segments follow: residues 12–32 (ILILIIFVTLSVFLIVFKGLD), 243–263 (LKGTAIALLLAFIAVGIIVSI), 272–292 (IPILITCISEVIIILGFASLI), 298–318 (LPSIAGIIAAVGTGVDNQIVI), 338–358 (FFIIFASAATSIAAMLPLFVL), and 360–380 (VGMLKGFAITTIAGVLIGIFI).

It belongs to the SecD/SecF family. SecD subfamily. As to quaternary structure, part of the protein translocation apparatus. Forms a complex with SecF.

The protein localises to the cell membrane. Its function is as follows. Involved in protein export. This Methanocaldococcus jannaschii (strain ATCC 43067 / DSM 2661 / JAL-1 / JCM 10045 / NBRC 100440) (Methanococcus jannaschii) protein is Protein-export membrane protein SecD.